The chain runs to 527 residues: Protein disulfide-isomerase A2 (527 aa).

The N-terminal stretch at 1 to 20 (MDKQLLPVLLLLLGVSGSWG) is a signal peptide. The interval 20 to 41 (GQGEEPGGPSEVLPEEPTGEEV) is disordered. The region spanning 29-155 (SEVLPEEPTG…IAEWLRRRVG (127 aa)) is the Thioredoxin 1 domain. Catalysis depends on nucleophile residues Cys-74 and Cys-77. Cys-74 and Cys-77 are oxidised to a cystine. N-linked (GlcNAc...) asparagine glycans are attached at residues Asn-130 and Asn-287. Residues 355 to 499 (VIAITAASVA…FSKFLDSGGH (145 aa)) form the Thioredoxin 2 domain. Catalysis depends on nucleophile residues Cys-421 and Cys-424. Cys-421 and Cys-424 are joined by a disulfide. Residues 495 to 527 (DSGGHLPKEEPKEPAASAPEAQANSTLGPKEEL) form a disordered region. An N-linked (GlcNAc...) asparagine glycan is attached at Asn-518. Residues 524–527 (KEEL) carry the Prevents secretion from ER motif.

The protein belongs to the protein disulfide isomerase family. In terms of assembly, part of a large chaperone multiprotein complex comprising DNAJB11, HSP90B1, HSPA5, HYOU, PDIA2, PDIA4, PDIA6, PPIB, SDF2L1, UGGT1 and very small amounts of ERP29, but not, or at very low levels, CALR nor CANX. In terms of processing, glycosylated. In terms of tissue distribution, highly expressed in pancreas.

The protein resides in the endoplasmic reticulum lumen. It carries out the reaction Catalyzes the rearrangement of -S-S- bonds in proteins.. In terms of biological role, acts as an intracellular estrogen-binding protein. May be involved in modulating cellular levels and biological functions of estrogens in the pancreas. May act as a chaperone that inhibits aggregation of misfolded proteins. This Mus musculus (Mouse) protein is Protein disulfide-isomerase A2.